Consider the following 363-residue polypeptide: Spermatogenesis-associated protein 22 (363 aa).

Composition is skewed to polar residues over residues 1–12, 30–48, 98–108, and 140–157; these read MKRSLNENSARS, QPLT…TPSD, IQSNTGRSQGG, and NDGK…QQKQ. 3 disordered regions span residues 1–51, 98–127, and 140–170; these read MKRS…DNYD, IQSN…NKND, and NDGK…SRNK.

In terms of assembly, component of a multiprotein complex with MEIOB and RPA2. Interacts with MEIOB. Interacts with the complex BRME1:HSF2BP:BRCA2. In terms of tissue distribution, highly expressed in adult testis.

The protein localises to the chromosome. Meiosis-specific protein required for homologous recombination in meiosis I. The protein is Spermatogenesis-associated protein 22 of Homo sapiens (Human).